Reading from the N-terminus, the 324-residue chain is MIRSVVRGIGGALPKKSLSNDDIAKFVETSDSWIVQRTGIRQRYIANEKETTVSLGVEAAQAALINAGLTIKDIDCIILATSTPNHTFPASAVEIQHALGMSHGFAFDIQAVCSGFIFALTTGDAYLRCGTAKRILVIGSDTFSRILDWQDRTTCVLFGDGAGAAVLEAQEIERGVASDHGILSTKLRSNGAYMDKLYVDGGPSTTQKTGYLRMEGREVFKYAVGMITDVVDECFAAAGMDSSQLDWFVPHQANKRIIEASAKKLGISIDKVVITVDRHGNTSAASVPLALTMAICDGKIKKGDLVMLEAMGGGFTWGAILIRW.

Active-site residues include cysteine 113 and histidine 251. The interval 252–256 (QANKR) is ACP-binding. Asparagine 281 is a catalytic residue.

It belongs to the thiolase-like superfamily. FabH family. As to quaternary structure, homodimer.

It is found in the cytoplasm. It catalyses the reaction malonyl-[ACP] + acetyl-CoA + H(+) = 3-oxobutanoyl-[ACP] + CO2 + CoA. The protein operates within lipid metabolism; fatty acid biosynthesis. Functionally, catalyzes the condensation reaction of fatty acid synthesis by the addition to an acyl acceptor of two carbons from malonyl-ACP. Catalyzes the first condensation reaction which initiates fatty acid synthesis and may therefore play a role in governing the total rate of fatty acid production. Possesses both acetoacetyl-ACP synthase and acetyl transacylase activities. Its substrate specificity determines the biosynthesis of branched-chain and/or straight-chain of fatty acids. The chain is Beta-ketoacyl-[acyl-carrier-protein] synthase III from Bartonella henselae (strain ATCC 49882 / DSM 28221 / CCUG 30454 / Houston 1) (Rochalimaea henselae).